A 424-amino-acid chain; its full sequence is Adenylosuccinate synthetase 2 (424 aa).

GTP is bound by residues Gly11 to Lys17 and Gly39 to Thr41. The Proton acceptor role is filled by Asp12. Mg(2+) contacts are provided by Asp12 and Gly39. IMP is bound by residues Asp12 to Lys15, Asn37 to His40, Thr127, Arg141, Gln223, Thr238, and Arg302. His40 (proton donor) is an active-site residue. Residue Thr298–Arg304 coordinates substrate. GTP contacts are provided by residues Arg304, Lys330–Asp332, and Ser412–Gly414.

It belongs to the adenylosuccinate synthetase family. Homodimer. Mg(2+) is required as a cofactor.

The protein localises to the cytoplasm. It carries out the reaction IMP + L-aspartate + GTP = N(6)-(1,2-dicarboxyethyl)-AMP + GDP + phosphate + 2 H(+). Its pathway is purine metabolism; AMP biosynthesis via de novo pathway; AMP from IMP: step 1/2. Functionally, plays an important role in the de novo pathway of purine nucleotide biosynthesis. Catalyzes the first committed step in the biosynthesis of AMP from IMP. This is Adenylosuccinate synthetase 2 from Methanosarcina acetivorans (strain ATCC 35395 / DSM 2834 / JCM 12185 / C2A).